Consider the following 426-residue polypeptide: Glutamyl-tRNA reductase (426 aa).

Residues 50 to 53 (TCNR), Ser108, 113 to 115 (EPQ), and Gln119 each bind substrate. The active-site Nucleophile is Cys51. Residue 188 to 193 (GAGEMI) coordinates NADP(+).

It belongs to the glutamyl-tRNA reductase family. In terms of assembly, homodimer.

The enzyme catalyses (S)-4-amino-5-oxopentanoate + tRNA(Glu) + NADP(+) = L-glutamyl-tRNA(Glu) + NADPH + H(+). It participates in porphyrin-containing compound metabolism; protoporphyrin-IX biosynthesis; 5-aminolevulinate from L-glutamyl-tRNA(Glu): step 1/2. Its function is as follows. Catalyzes the NADPH-dependent reduction of glutamyl-tRNA(Glu) to glutamate 1-semialdehyde (GSA). The sequence is that of Glutamyl-tRNA reductase from Polaromonas sp. (strain JS666 / ATCC BAA-500).